The chain runs to 210 residues: Putative truncated L-serine dehydratase SDL1 (210 aa).

This sequence belongs to the serine/threonine dehydratase family. The cofactor is pyridoxal 5'-phosphate.

It localises to the cytoplasm. The catalysed reaction is L-serine = pyruvate + NH4(+). It functions in the pathway carbohydrate biosynthesis; gluconeogenesis. This Saccharomyces cerevisiae (strain ATCC 204508 / S288c) (Baker's yeast) protein is Putative truncated L-serine dehydratase SDL1 (SDL1).